The primary structure comprises 637 residues: Biosynthetic arginine decarboxylase (637 aa).

Lysine 101 is modified (N6-(pyridoxal phosphate)lysine). Residue 286-296 (FDVGGGLAVDY) participates in substrate binding.

It belongs to the Orn/Lys/Arg decarboxylase class-II family. SpeA subfamily. Mg(2+) is required as a cofactor. Requires pyridoxal 5'-phosphate as cofactor.

The catalysed reaction is L-arginine + H(+) = agmatine + CO2. It participates in amine and polyamine biosynthesis; agmatine biosynthesis; agmatine from L-arginine: step 1/1. Functionally, catalyzes the biosynthesis of agmatine from arginine. The chain is Biosynthetic arginine decarboxylase from Shewanella sediminis (strain HAW-EB3).